Consider the following 102-residue polypeptide: Acylphosphatase 1 (102 aa).

In terms of domain architecture, Acylphosphatase-like spans 12–100 (TRLVRVRGRV…PRFDRFEQLP (89 aa)). Catalysis depends on residues arginine 27 and asparagine 45.

It belongs to the acylphosphatase family.

The catalysed reaction is an acyl phosphate + H2O = a carboxylate + phosphate + H(+). The chain is Acylphosphatase 1 (acyP1) from Ralstonia nicotianae (strain ATCC BAA-1114 / GMI1000) (Ralstonia solanacearum).